The following is a 662-amino-acid chain: UPF0313 protein CPE1196 (662 aa).

One can recognise a Radical SAM core domain in the interval A296–K567. Residues C310, C314, and C317 each coordinate [4Fe-4S] cluster. The disordered stretch occupies residues R597 to R662. Over residues N618–K632 the composition is skewed to basic and acidic residues. Residues R633 to K644 show a composition bias toward basic residues.

This sequence belongs to the UPF0313 family. It depends on [4Fe-4S] cluster as a cofactor.

In Clostridium perfringens (strain 13 / Type A), this protein is UPF0313 protein CPE1196.